The sequence spans 130 residues: uncharacterized protein (130 aa).

This is an uncharacterized protein from Bacillus subtilis (strain 168).